The primary structure comprises 340 residues: Nitrilase (340 aa).

Positions 7-273 (IRAAAVQIAP…EGMVVADLDM (267 aa)) constitute a CN hydrolase domain. The Proton acceptor role is filled by Glu-47. Lys-129 is a catalytic residue. The Nucleophile role is filled by Cys-163.

The protein belongs to the carbon-nitrogen hydrolase superfamily. Nitrilase family. Forms oligomers.

The enzyme catalyses a nitrile + 2 H2O = a carboxylate + NH4(+). It carries out the reaction phenylpropanonitrile + 2 H2O = 3-phenylpropanoate + NH4(+). It catalyses the reaction an aliphatic nitrile + 2 H2O = a carboxylate + NH4(+). With respect to regulation, highly resistant to various miscible cosolvents and tolerates high substrate concentrations. Catalyzes the hydrolysis of a broad range of nitriles to yield their corresponding carboxylic acid and ammonia. In vitro, shows high activity toward benzylic/unsaturated nitriles. The preferred substrate is trans-cinnamonitrile, followed by mono/di-cyanopyridines and aromatic substituted nitriles, with a moderate activity toward 3-phenylpropionitrile. Shows weaker activity toward the common dinitrile fumaronitrile. Also shows weak activity toward some aliphatic nitriles, including adiponitrile and glutaronitrile, and the arylacetonitrile 2-thiopheneacetonitrile. In Paraburkholderia phymatum (strain DSM 17167 / CIP 108236 / LMG 21445 / STM815) (Burkholderia phymatum), this protein is Nitrilase.